The primary structure comprises 261 residues: Segregation and condensation protein A (261 aa).

This sequence belongs to the ScpA family. Component of a cohesin-like complex composed of ScpA, ScpB and the Smc homodimer, in which ScpA and ScpB bind to the head domain of Smc. The presence of the three proteins is required for the association of the complex with DNA.

It is found in the cytoplasm. In terms of biological role, participates in chromosomal partition during cell division. May act via the formation of a condensin-like complex containing Smc and ScpB that pull DNA away from mid-cell into both cell halves. The polypeptide is Segregation and condensation protein A (Leptospira interrogans serogroup Icterohaemorrhagiae serovar copenhageni (strain Fiocruz L1-130)).